Reading from the N-terminus, the 136-residue chain is Late embryogenesis abundant protein D-7 (136 aa).

Disordered regions lie at residues 1 to 108 and 117 to 136; these read MASH…AQGA and GMAD…TRKD. A compositionally biased stretch (basic and acidic residues) spans 11 to 58; it reads GRAEGRAHEKGEQMKESMKEKAEAAKQKTMETAEAAKQKTMETAEAAK. LEA 11-mer repeat repeat units lie at residues 31 to 41, 42 to 52, 53 to 63, 64 to 74, and 75 to 85; these read KAEAAKQKTME, TAEAAKQKTME, TAEAAKQKTRG, AAETTNDKTKQ, and TAGAARGKAEE.

It belongs to the LEA type 4 family.

Its function is as follows. LEA proteins are late embryonic proteins abundant in higher plant seed embryos. There are two subsets of LEA proteins (5a and 5b), the first ones are expressed when the cotyledon weight reach 80 mg and the second set are expressed above 100 mg. The function of those proteins is not known. This Gossypium hirsutum (Upland cotton) protein is Late embryogenesis abundant protein D-7.